The primary structure comprises 371 residues: Glycosyltransferase 8 domain-containing protein 1 (371 aa).

Topologically, residues 1–7 (MSFRKVN) are cytoplasmic. The chain crosses the membrane as a helical; Signal-anchor for type II membrane protein span at residues 8 to 28 (IVILVLAVALFLLVLHHNFLG). At 29–371 (LSSLLRNEVS…RRHVEISNTK (343 aa)) the chain is on the lumenal side. N-linked (GlcNAc...) asparagine glycosylation is found at Asn-103 and Asn-257.

This sequence belongs to the glycosyltransferase 8 family.

Its subcellular location is the membrane. The sequence is that of Glycosyltransferase 8 domain-containing protein 1 (GLT8D1) from Bos taurus (Bovine).